The primary structure comprises 746 residues: Exocyst complex component 3-like protein (746 aa).

Residues 1–23 form a disordered region; sequence MDSAAKDEMQPALSPGPEWPEQE. Residues 1-370 form a mediates interaction with EXOC2, EXOC4 and EXOC5 region; that stretch reads MDSAAKDEMQ…DVSQLEPLLT (370 aa).

Belongs to the SEC6 family. As to quaternary structure, interacts with EXOC2, EXOC4 and EXOC5; may be part of the exocyst.

It is found in the cytoplasmic vesicle. Its subcellular location is the secretory vesicle. Functionally, as part of the exocyst, may play a role in regulated exocytosis of insulin granules. This chain is Exocyst complex component 3-like protein (EXOC3L1), found in Homo sapiens (Human).